We begin with the raw amino-acid sequence, 192 residues long: Ferritin-like protein (192 aa).

Fe(3+) contacts are provided by histidine 44, glutamate 48, and histidine 102. Positions 143 to 179 (RFDHDYADPHAHHDEHRDHLADMPSAGSSHEEVQPVA) are linker. Residues 149–163 (ADPHAHHDEHRDHLA) show a composition bias toward basic and acidic residues. A disordered region spans residues 149-192 (ADPHAHHDEHRDHLADMPSAGSSHEEVQPVAHKKKGFTVGSLIQ). Positions 180–192 (HKKKGFTVGSLIQ) are targeting peptide.

Homodimer, with 2 Fe atoms bound at the subunit interface (without encapsulin), probably also a dimer when encapsulated. 42 electron-dense accretions can be seen inside the nanocompartment which are probably this cargo protein, although perhaps up to one cargo dimer can be bound per shell protein.

Its subcellular location is the encapsulin nanocompartment. The catalysed reaction is 4 Fe(2+) + O2 + 4 H(+) = 4 Fe(3+) + 2 H2O. Functionally, cargo protein of a type 1 encapsulin nanocompartment. A ferritin-like iron-binding protein probably involved in iron mineralization in the encapsulin nanocompartment. Has ferroxidase activity even when encapsulated, the rate is probably controlled by the rate of Fe flux across the nanocompartment pores. Part of the iron-mineralizing encapsulin-associated Firmicute (IMEF) system. 2 different cargo proteins have been identified (IMEF and Fer); when both are expressed in E.coli with the shell protein only IMEF is detected within the nanocompartment. E.coli expressing all 3 genes stores the largest amount of iron and is protected from Fe/H2O2-induced oxidative stress. This chain is Ferritin-like protein, found in Bacillus thermotolerans (Quasibacillus thermotolerans).